The following is a 354-amino-acid chain: Uroporphyrinogen decarboxylase (354 aa).

Substrate contacts are provided by residues 25–29, phenylalanine 44, aspartate 75, tyrosine 152, threonine 207, and histidine 330; that span reads RQAGR.

It belongs to the uroporphyrinogen decarboxylase family. Homodimer.

It is found in the cytoplasm. The enzyme catalyses uroporphyrinogen III + 4 H(+) = coproporphyrinogen III + 4 CO2. Its pathway is porphyrin-containing compound metabolism; protoporphyrin-IX biosynthesis; coproporphyrinogen-III from 5-aminolevulinate: step 4/4. In terms of biological role, catalyzes the decarboxylation of four acetate groups of uroporphyrinogen-III to yield coproporphyrinogen-III. The polypeptide is Uroporphyrinogen decarboxylase (Xanthomonas axonopodis pv. citri (strain 306)).